We begin with the raw amino-acid sequence, 1481 residues long: RNA helicase aquarius (1481 aa).

The interval 1 to 416 is helical region with structural similarity to ARM repeat domains; sequence MAAPAQPKKI…LVSRHERRIS (416 aa). The interval 417–1481 is required for assembly of the IB complex; sequence QIQQLNQMPL…DAESVPTETE (1065 aa). The disordered stretch occupies residues 754–773; the sequence is RSGKGKKRKDADGEEDDTEE. Residues Gln801, Gln806, and 826-831 each bind ATP; that span reads GTGKTD. N6-acetyllysine is present on Lys1055. The segment covering 1396–1414 has biased composition (acidic residues); sequence EEGEEGQSQETEMEAEEET. Residues 1396-1481 form a disordered region; it reads EEGEEGQSQE…DAESVPTETE (86 aa). A compositionally biased stretch (polar residues) spans 1418–1448; it reads QGNLTPSPADASLSQETPAAQPDCSSQTEDT. Low complexity predominate over residues 1455-1468; it reads ATAAEPVSAAAEAA.

It belongs to the CWF11 family. As to quaternary structure, identified in the spliceosome C complex. Component of the XAB2 complex, a multimeric protein complex composed of XAB2, PRPF19, AQR, ZNF830, ISY1, and PPIE. Identified in a pentameric intron-binding (IB) complex composed of AQR, XAB2, ISY1, ZNF830 and PPIE that is incorporated into the spliceosome as a preassembled complex. The IB complex does not contain PRPF19. Within the spliceosome, interacts with SNRPA1, SF3B1, SF3B3, SF3A1 and SF3A2.

The protein resides in the nucleus. It is found in the nucleoplasm. The catalysed reaction is ATP + H2O = ADP + phosphate + H(+). Its function is as follows. Involved in pre-mRNA splicing as component of the spliceosome. Intron-binding spliceosomal protein required to link pre-mRNA splicing and snoRNP (small nucleolar ribonucleoprotein) biogenesis. Plays a key role in position-dependent assembly of intron-encoded box C/D small snoRNP, splicing being required for snoRNP assembly. May act by helping the folding of the snoRNA sequence. Binds to intron of pre-mRNAs in a sequence-independent manner, contacting the region between snoRNA and the branchpoint of introns (40 nucleotides upstream of the branchpoint) during the late stages of splicing. Has ATP-dependent RNA helicase activity and can unwind double-stranded RNA molecules with a 3' overhang (in vitro). The protein is RNA helicase aquarius (Aqr) of Mus musculus (Mouse).